Here is a 1496-residue protein sequence, read N- to C-terminus: Synaptojanin-2 (1496 aa).

An SAC domain is found at 120 to 444 (LKKILSSGVF…GHGLSKVFTG (325 aa)). The region spanning 906-985 (DATVIVNLQS…RAVKIRPKTK (80 aa)) is the RRM domain. 6 disordered regions span residues 1047 to 1083 (VVSD…HPTY), 1100 to 1149 (GNFR…GTHG), 1205 to 1357 (VPES…LQVL), 1393 to 1413 (SSAI…AASF), 1442 to 1461 (EPLD…SAQV), and 1468 to 1496 (RGLP…TLGV). A compositionally biased stretch (low complexity) spans 1063–1074 (SASTPASKSPAL). Pro residues predominate over residues 1116–1130 (RPRPPHPPQRPPPPT). Phosphoserine is present on Ser1139. Residues 1139–1149 (SDASISSGTHG) show a composition bias toward polar residues. 2 stretches are compositionally biased toward pro residues: residues 1230 to 1239 (PVLPRRPVPR) and 1279 to 1292 (TPPP…PVPK). Low complexity predominate over residues 1324–1338 (ELSSPEAPEAPSLAP). Composition is skewed to basic and acidic residues over residues 1470-1480 (LPPDHGGKDFS) and 1487-1496 (NKDKRTTLGV).

The protein belongs to the synaptojanin family. In the central section; belongs to the inositol 1,4,5-trisphosphate 5-phosphatase family. In terms of assembly, binds to GRB2. Isoform 2A binds to SYNJ2BP/OMP25. In terms of tissue distribution, widely expressed. Isoforms 2B1 and 2B2 are concentrated at nerve terminals in brain and at spermatid manchette in testis.

It localises to the cytoplasm. The protein resides in the cell membrane. It is found in the presynapse. Its subcellular location is the cytoskeleton. The protein localises to the membrane raft. It localises to the mitochondrion. It carries out the reaction a 1,2-diacyl-sn-glycero-3-phospho-(1D-myo-inositol-4,5-bisphosphate) + H2O = a 1,2-diacyl-sn-glycero-3-phospho-(1D-myo-inositol 4-phosphate) + phosphate. Its function is as follows. Inositol 5-phosphatase which may be involved in distinct membrane trafficking and signal transduction pathways. May mediate the inhibitory effect of Rac1 on endocytosis. This Rattus norvegicus (Rat) protein is Synaptojanin-2 (Synj2).